A 351-amino-acid chain; its full sequence is Transaldolase (351 aa).

The Schiff-base intermediate with substrate role is filled by Lys-138.

Belongs to the transaldolase family. Type 2 subfamily.

It localises to the cytoplasm. It carries out the reaction D-sedoheptulose 7-phosphate + D-glyceraldehyde 3-phosphate = D-erythrose 4-phosphate + beta-D-fructose 6-phosphate. The protein operates within carbohydrate degradation; pentose phosphate pathway; D-glyceraldehyde 3-phosphate and beta-D-fructose 6-phosphate from D-ribose 5-phosphate and D-xylulose 5-phosphate (non-oxidative stage): step 2/3. Functionally, transaldolase is important for the balance of metabolites in the pentose-phosphate pathway. The chain is Transaldolase (tal) from Neisseria meningitidis serogroup A / serotype 4A (strain DSM 15465 / Z2491).